We begin with the raw amino-acid sequence, 76 residues long: Esculentin-2MT1 (76 aa).

The first 22 residues, 1 to 22, serve as a signal peptide directing secretion; that stretch reads MFTMKKPLLLLFFLGTISLSLC. A propeptide spanning residues 23 to 37 is cleaved from the precursor; that stretch reads EEERNADEDDGEKEV. An intrachain disulfide couples C70 to C76.

This sequence belongs to the frog skin active peptide (FSAP) family. Esculentin subfamily. In terms of tissue distribution, expressed by the skin glands.

It is found in the secreted. Functionally, antimicrobial peptide. The sequence is that of Esculentin-2MT1 from Amolops mantzorum (Sichuan torrent frog).